We begin with the raw amino-acid sequence, 132 residues long: Guanyl-specific ribonuclease C2 (132 aa).

Positions 1–26 are cleaved as a signal peptide; sequence MLYNKLITIAALLVPALAAPQGLDVR. 2 disulfide bridges follow: Cys-28–Cys-36 and Cys-32–Cys-129. The active site involves His-66. Glu-84 serves as the catalytic Proton acceptor. The active-site Proton donor is His-118.

This sequence belongs to the ribonuclease N1/T1 family.

The protein resides in the secreted. It catalyses the reaction [RNA] containing guanosine + H2O = an [RNA fragment]-3'-guanosine-3'-phosphate + a 5'-hydroxy-ribonucleotide-3'-[RNA fragment].. This is Guanyl-specific ribonuclease C2 from Aspergillus clavatus (strain ATCC 1007 / CBS 513.65 / DSM 816 / NCTC 3887 / NRRL 1 / QM 1276 / 107).